The following is a 700-amino-acid chain: Mitosis inducer protein blt1 (700 aa).

Polar residues-rich tracts occupy residues 1–11 (MSKSAFTSKSQ) and 43–53 (PRSTALPNLSN). Disordered regions lie at residues 1-53 (MSKS…NLSN) and 266-293 (TNNR…SKDQ). Low complexity predominate over residues 273-284 (GSDGSNSNFNGG). Residues 496–575 (SVALDDHNRQ…LNMLQKLSMQ (80 aa)) are a coiled coil. 2 disordered regions span residues 634 to 659 (FSSF…RKPS) and 671 to 700 (SSGS…SSKM). A Phosphoserine modification is found at Ser-636.

Interacts with cdr2, mid1 and sad1.

It is found in the cytoplasm. Its subcellular location is the cytoskeleton. Its function is as follows. At the onset of mitosis, forms a medial ring structure before the arrangement of the medial actin ring. Essential for the central positioning of the division septum before the cell divides. The polypeptide is Mitosis inducer protein blt1 (blt1) (Schizosaccharomyces pombe (strain 972 / ATCC 24843) (Fission yeast)).